A 499-amino-acid polypeptide reads, in one-letter code: Ethanolamine-phosphate phospho-lyase (499 aa).

Lys-278 bears the N6-(pyridoxal phosphate)lysine mark. Basic and acidic residues predominate over residues 468–479 (RDSTTDSKENPS). Residues 468–499 (RDSTTDSKENPSRKRNGMCTDTHSLLSKRLKT) form a disordered region.

The protein belongs to the class-III pyridoxal-phosphate-dependent aminotransferase family. As to quaternary structure, homotetramer. The cofactor is pyridoxal 5'-phosphate.

It localises to the mitochondrion. It catalyses the reaction phosphoethanolamine + H2O = acetaldehyde + NH4(+) + phosphate. Its function is as follows. Catalyzes the pyridoxal-phosphate-dependent breakdown of phosphoethanolamine, converting it to ammonia, inorganic phosphate and acetaldehyde. This is Ethanolamine-phosphate phospho-lyase (ETNPPL) from Homo sapiens (Human).